Consider the following 347-residue polypeptide: NADH-quinone oxidoreductase subunit H (347 aa).

8 helical membrane passes run 21–41 (IAGILLIALPLMLGVAMIIYA), 87–107 (GLFLIAPIITFTVALMAWAVI), 120–140 (VGLLYVLAISSLGVYGVVIAG), 160–180 (ISYEVSIGFILICVVLWAGTF), 194–214 (WIINGFVANPLLFPMWVMFLI), 259–279 (LLMCALNAVLFWGGYLPPLDI), 282–302 (LYLVPGFVWLLLKILFFFFIF), and 324–344 (VFLPVSLLFVFLVSGYLMATG).

Belongs to the complex I subunit 1 family. As to quaternary structure, NDH-1 is composed of 14 different subunits. Subunits NuoA, H, J, K, L, M, N constitute the membrane sector of the complex.

It is found in the cell inner membrane. It catalyses the reaction a quinone + NADH + 5 H(+)(in) = a quinol + NAD(+) + 4 H(+)(out). Its function is as follows. NDH-1 shuttles electrons from NADH, via FMN and iron-sulfur (Fe-S) centers, to quinones in the respiratory chain. The immediate electron acceptor for the enzyme in this species is believed to be ubiquinone. Couples the redox reaction to proton translocation (for every two electrons transferred, four hydrogen ions are translocated across the cytoplasmic membrane), and thus conserves the redox energy in a proton gradient. This subunit may bind ubiquinone. This Novosphingobium aromaticivorans (strain ATCC 700278 / DSM 12444 / CCUG 56034 / CIP 105152 / NBRC 16084 / F199) protein is NADH-quinone oxidoreductase subunit H.